The following is a 186-amino-acid chain: Testis-expressed protein 29 (186 aa).

Topologically, residues Met-1 to Pro-56 are extracellular. Residues Ile-57–Val-77 traverse the membrane as a helical segment. At Ile-78–Lys-151 the chain is on the cytoplasmic side. Disordered stretches follow at residues Ser-104–Ser-138 and Lys-151–Pro-186. Positions Glu-108 to Val-133 are enriched in pro residues.

It is found in the membrane. This is Testis-expressed protein 29 (Tex29) from Mus musculus (Mouse).